The following is a 142-amino-acid chain: Prefoldin subunit alpha 2 (142 aa).

This sequence belongs to the prefoldin subunit alpha family. In terms of assembly, heterohexamer of two alpha and four beta subunits.

Its subcellular location is the cytoplasm. Functionally, molecular chaperone capable of stabilizing a range of proteins. Seems to fulfill an ATP-independent, HSP70-like function in archaeal de novo protein folding. This is Prefoldin subunit alpha 2 from Thermococcus kodakarensis (strain ATCC BAA-918 / JCM 12380 / KOD1) (Pyrococcus kodakaraensis (strain KOD1)).